A 771-amino-acid chain; its full sequence is 5-methyltetrahydropteroyltriglutamate--homocysteine methyltransferase (771 aa).

5-methyltetrahydropteroyltri-L-glutamate is bound by residues 13–16 (RELK) and K128. L-homocysteine-binding positions include 451–453 (IGS) and E504. L-methionine contacts are provided by residues 451-453 (IGS) and E504. 5-methyltetrahydropteroyltri-L-glutamate is bound by residues 535–536 (RC) and W581. D619 is an L-homocysteine binding site. L-methionine is bound at residue D619. E625 is a binding site for 5-methyltetrahydropteroyltri-L-glutamate. The Zn(2+) site is built by H661, C663, and E685. H714 acts as the Proton donor in catalysis. C746 contributes to the Zn(2+) binding site.

The protein belongs to the vitamin-B12 independent methionine synthase family. Zn(2+) is required as a cofactor.

The enzyme catalyses 5-methyltetrahydropteroyltri-L-glutamate + L-homocysteine = tetrahydropteroyltri-L-glutamate + L-methionine. The protein operates within amino-acid biosynthesis; L-methionine biosynthesis via de novo pathway; L-methionine from L-homocysteine (MetE route): step 1/1. In terms of biological role, catalyzes the transfer of a methyl group from 5-methyltetrahydrofolate to homocysteine resulting in methionine formation. This is 5-methyltetrahydropteroyltriglutamate--homocysteine methyltransferase from Nitrobacter winogradskyi (strain ATCC 25391 / DSM 10237 / CIP 104748 / NCIMB 11846 / Nb-255).